The sequence spans 259 residues: Putative zinc metalloprotease Rip2 (259 aa).

2 helical membrane passes run 14 to 34 (PIFL…WIAA) and 39 to 59 (PLSY…SLCL). Residue histidine 60 participates in Zn(2+) binding. The active site involves glutamate 61. Histidine 64 contacts Zn(2+). 4 helical membrane-spanning segments follow: residues 96–116 (LGLP…GAVY), 129–149 (IVSL…LGLT), 159–179 (VFWS…VLNL), and 203–223 (LAPA…TPAL).

It belongs to the peptidase M50B family. Requires Zn(2+) as cofactor.

The protein resides in the cell membrane. This Mycolicibacterium smegmatis (strain ATCC 700084 / mc(2)155) (Mycobacterium smegmatis) protein is Putative zinc metalloprotease Rip2 (rip2).